The chain runs to 162 residues: NADH-quinone oxidoreductase subunit I (162 aa).

2 consecutive 4Fe-4S ferredoxin-type domains span residues 54–83 (RRYE…IESE) and 93–122 (TRYD…ETQI). Positions 63, 66, 69, 73, 102, 105, 108, and 112 each coordinate [4Fe-4S] cluster.

This sequence belongs to the complex I 23 kDa subunit family. NDH-1 is composed of 14 different subunits. Subunits NuoA, H, J, K, L, M, N constitute the membrane sector of the complex. It depends on [4Fe-4S] cluster as a cofactor.

It localises to the cell inner membrane. The catalysed reaction is a quinone + NADH + 5 H(+)(in) = a quinol + NAD(+) + 4 H(+)(out). In terms of biological role, NDH-1 shuttles electrons from NADH, via FMN and iron-sulfur (Fe-S) centers, to quinones in the respiratory chain. The immediate electron acceptor for the enzyme in this species is believed to be ubiquinone. Couples the redox reaction to proton translocation (for every two electrons transferred, four hydrogen ions are translocated across the cytoplasmic membrane), and thus conserves the redox energy in a proton gradient. The sequence is that of NADH-quinone oxidoreductase subunit I from Burkholderia pseudomallei (strain 668).